The primary structure comprises 623 residues: Glutathione import ATP-binding protein GsiA (623 aa).

ABC transporter domains are found at residues 15–269 (VSGL…QTLL) and 325–564 (LRSG…RKLM). ATP-binding positions include 49-56 (GESGSGKS) and 357-364 (GESGSGKS).

This sequence belongs to the ABC transporter superfamily. Glutathione importer (TC 3.A.1.5.11) family. As to quaternary structure, the complex is composed of two ATP-binding proteins (GsiA), two transmembrane proteins (GsiC and GsiD) and a solute-binding protein (GsiB).

It is found in the cell inner membrane. The enzyme catalyses glutathione(out) + ATP + H2O = glutathione(in) + ADP + phosphate + H(+). Its function is as follows. Part of the ABC transporter complex GsiABCD involved in glutathione import. Responsible for energy coupling to the transport system. This is Glutathione import ATP-binding protein GsiA from Salmonella typhi.